The sequence spans 264 residues: Thymidylate synthase (264 aa).

Arginine 21 contacts dUMP. Histidine 51 lines the (6R)-5,10-methylene-5,6,7,8-tetrahydrofolate pocket. Residue 126–127 (RR) coordinates dUMP. The Nucleophile role is filled by cysteine 146. Residues 166–169 (RSAD), asparagine 177, and 207–209 (HIY) each bind dUMP. Position 169 (aspartate 169) interacts with (6R)-5,10-methylene-5,6,7,8-tetrahydrofolate. Alanine 263 lines the (6R)-5,10-methylene-5,6,7,8-tetrahydrofolate pocket.

Belongs to the thymidylate synthase family. Bacterial-type ThyA subfamily. As to quaternary structure, homodimer.

Its subcellular location is the cytoplasm. The enzyme catalyses dUMP + (6R)-5,10-methylene-5,6,7,8-tetrahydrofolate = 7,8-dihydrofolate + dTMP. It functions in the pathway pyrimidine metabolism; dTTP biosynthesis. In terms of biological role, catalyzes the reductive methylation of 2'-deoxyuridine-5'-monophosphate (dUMP) to 2'-deoxythymidine-5'-monophosphate (dTMP) while utilizing 5,10-methylenetetrahydrofolate (mTHF) as the methyl donor and reductant in the reaction, yielding dihydrofolate (DHF) as a by-product. This enzymatic reaction provides an intracellular de novo source of dTMP, an essential precursor for DNA biosynthesis. This Agrobacterium fabrum (strain C58 / ATCC 33970) (Agrobacterium tumefaciens (strain C58)) protein is Thymidylate synthase.